The chain runs to 119 residues: Toxin ICK-9 (119 aa).

Residues 1–19 (MMKLYSLVIIATLAAAAFA) form the signal peptide. 4 cysteine pairs are disulfide-bonded: Cys-59-Cys-74, Cys-67-Cys-80, Cys-71-Cys-116, and Cys-73-Cys-87.

This sequence belongs to the neurotoxin 25 family. ICK-8 subfamily. In terms of tissue distribution, expressed by the venom gland.

It localises to the secreted. Ion channel inhibitor. This chain is Toxin ICK-9, found in Trittame loki (Brush-footed trapdoor spider).